Consider the following 280-residue polypeptide: Apoptosis regulator ced-9 (280 aa).

A disordered region spans residues 33–59 (GTEPTDFGINSDAQDLPSPSRQASTRR). Residues 43–59 (SDAQDLPSPSRQASTRR) show a composition bias toward polar residues. The BH4 signature appears at 80–99 (IEGFVVDYFTHRIRQNGMEW). The short motif at 160–179 (QTDQCPMSYGRLIGLISFGG) is the BH1 element. The BH2 signature appears at 213-229 (NWKEHNRSWDDFMTLGK).

Belongs to the Bcl-2 family. As to quaternary structure, interacts with asymmetric homodimer ced-4; the interaction sequesters ced-4. Interacts with egl-1; the interaction results in ced-4 release. Interacts with dre-1; the interaction inhibits ced-9 activity, either directly or indirectly. Interacts with dct-1. May form a complex composed of ced-9, ced-4 and mac-1. Interacts with dynamin-related protein drp-1 (via residues 280-502); the interaction is enhanced by GTP rather than GDP; the interaction is probably direct and may occur at the mitochondrion. Interaction with drp-1 may be enhanced by interaction of ced-9 with egl-1, but not with ced-4. A ced-9/egl-1 complex may recruit drp-1 to the mitochondrial surface. Interacts with fzo-1; interaction may be suppressed by interaction of ced-9 with egl-1.

The protein resides in the perikaryon. The protein localises to the synapse. Its subcellular location is the endomembrane system. It localises to the mitochondrion membrane. It is found in the cytoplasm. Plays a major role in programmed cell death (PCD, apoptosis). egl-1 binds to and directly inhibits the activity of ced-9, releasing the cell death activator ced-4 from a ced-9/ced-4 containing protein complex and allowing ced-4 to activate the cell-killing caspase ced-3. During larval development, required for the elimination of transient presynaptic components downstream of egl-1 and upstream of ced-4 and ced-3 apoptotic pathway. Has been shown in one study to be dispensable in mitochondrial dynamics and morphology during early embryonic development. However, another study shows that a egl-1/ced-9 containing complex may promote drp-1-dependent mitochondrial fission. The polypeptide is Apoptosis regulator ced-9 (ced-9) (Caenorhabditis elegans).